A 332-amino-acid chain; its full sequence is Fructose-1,6-bisphosphatase class 1 (332 aa).

Positions 89, 110, 112, and 113 each coordinate Mg(2+). Residues 113–116, Asn-206, Tyr-239, 257–259, and Lys-269 each bind substrate; these read DGSS and YLY. Glu-275 is a binding site for Mg(2+).

It belongs to the FBPase class 1 family. In terms of assembly, homotetramer. Mg(2+) is required as a cofactor.

The protein resides in the cytoplasm. It catalyses the reaction beta-D-fructose 1,6-bisphosphate + H2O = beta-D-fructose 6-phosphate + phosphate. It participates in carbohydrate biosynthesis; gluconeogenesis. The chain is Fructose-1,6-bisphosphatase class 1 from Salmonella typhi.